A 152-amino-acid chain; its full sequence is FMN reductase (NADH) RutF (152 aa).

Belongs to the non-flavoprotein flavin reductase family. RutF subfamily.

It carries out the reaction FMNH2 + NAD(+) = FMN + NADH + 2 H(+). Functionally, catalyzes the reduction of FMN to FMNH2 which is used to reduce pyrimidine by RutA via the Rut pathway. The polypeptide is FMN reductase (NADH) RutF (Shigella flexneri).